We begin with the raw amino-acid sequence, 104 residues long: Large ribosomal subunit protein bL21c (104 aa).

This sequence belongs to the bacterial ribosomal protein bL21 family. Part of the 50S ribosomal subunit.

It is found in the plastid. It localises to the cyanelle. Functionally, this protein binds to 23S rRNA. This chain is Large ribosomal subunit protein bL21c, found in Cyanophora paradoxa.